The sequence spans 339 residues: Glycerol-3-phosphate dehydrogenase [NAD(P)+] (339 aa).

The NADPH site is built by serine 15, tyrosine 16, histidine 36, and lysine 110. Residues lysine 110, glycine 139, and threonine 141 each coordinate sn-glycerol 3-phosphate. Position 143 (alanine 143) interacts with NADPH. Positions 195, 248, 258, 259, and 260 each coordinate sn-glycerol 3-phosphate. The active-site Proton acceptor is lysine 195. Position 259 (arginine 259) interacts with NADPH. NADPH-binding residues include valine 283 and glutamate 285.

Belongs to the NAD-dependent glycerol-3-phosphate dehydrogenase family.

The protein resides in the cytoplasm. It carries out the reaction sn-glycerol 3-phosphate + NAD(+) = dihydroxyacetone phosphate + NADH + H(+). It catalyses the reaction sn-glycerol 3-phosphate + NADP(+) = dihydroxyacetone phosphate + NADPH + H(+). The protein operates within membrane lipid metabolism; glycerophospholipid metabolism. Its function is as follows. Catalyzes the reduction of the glycolytic intermediate dihydroxyacetone phosphate (DHAP) to sn-glycerol 3-phosphate (G3P), the key precursor for phospholipid synthesis. The protein is Glycerol-3-phosphate dehydrogenase [NAD(P)+] of Yersinia pseudotuberculosis serotype O:1b (strain IP 31758).